A 129-amino-acid chain; its full sequence is MPKTVITPPGTQTPIAPFSPGTLADGIVYVSGTLAFDKDNNVAFPGDAEAQTRQVLETIKSVIETAGGTMEDVTMNHIFLTDWVHYAPMNKVYAEYFPGDKPARYCIQCGLVKPGFVVEIASVAHIGKT.

It belongs to the RutC family.

The enzyme catalyses (Z)-3-aminoacrylate + H2O + H(+) = 3-oxopropanoate + NH4(+). Functionally, involved in pyrimidine catabolism. Catalyzes the deamination of 3-aminoacrylate to malonic semialdehyde, a reaction that can also occur spontaneously. RutC may facilitate the reaction and modulate the metabolic fitness, rather than catalyzing essential functions. The sequence is that of 3-aminoacrylate deaminase RutC from Caulobacter vibrioides (strain ATCC 19089 / CIP 103742 / CB 15) (Caulobacter crescentus).